A 482-amino-acid polypeptide reads, in one-letter code: Glutamyl-tRNA(Gln) amidotransferase subunit A (482 aa).

Catalysis depends on charge relay system residues K75 and S150. S174 acts as the Acyl-ester intermediate in catalysis.

Belongs to the amidase family. GatA subfamily. As to quaternary structure, heterotrimer of A, B and C subunits.

The enzyme catalyses L-glutamyl-tRNA(Gln) + L-glutamine + ATP + H2O = L-glutaminyl-tRNA(Gln) + L-glutamate + ADP + phosphate + H(+). Its function is as follows. Allows the formation of correctly charged Gln-tRNA(Gln) through the transamidation of misacylated Glu-tRNA(Gln) in organisms which lack glutaminyl-tRNA synthetase. The reaction takes place in the presence of glutamine and ATP through an activated gamma-phospho-Glu-tRNA(Gln). The polypeptide is Glutamyl-tRNA(Gln) amidotransferase subunit A (Deinococcus radiodurans (strain ATCC 13939 / DSM 20539 / JCM 16871 / CCUG 27074 / LMG 4051 / NBRC 15346 / NCIMB 9279 / VKM B-1422 / R1)).